A 350-amino-acid chain; its full sequence is Homoserine O-succinyltransferase (350 aa).

The Acyl-thioester intermediate role is filled by cysteine 146. 2 residues coordinate substrate: lysine 167 and serine 196. Catalysis depends on histidine 239, which acts as the Proton acceptor. Glutamate 241 is an active-site residue. Arginine 253 lines the substrate pocket.

Belongs to the MetA family.

Its subcellular location is the cytoplasm. It carries out the reaction L-homoserine + succinyl-CoA = O-succinyl-L-homoserine + CoA. Its pathway is amino-acid biosynthesis; L-methionine biosynthesis via de novo pathway; O-succinyl-L-homoserine from L-homoserine: step 1/1. Functionally, transfers a succinyl group from succinyl-CoA to L-homoserine, forming succinyl-L-homoserine. This is Homoserine O-succinyltransferase from Cardiobacterium hominis (strain ATCC 15826 / DSM 8339 / NCTC 10426 / 6573).